The sequence spans 267 residues: 4-hydroxy-tetrahydrodipicolinate reductase (267 aa).

NAD(+)-binding positions include 12 to 17 (GPRGRM), 100 to 102 (GTT), and 126 to 129 (APNF). Histidine 156 (proton donor/acceptor) is an active-site residue. Histidine 157 is a binding site for (S)-2,3,4,5-tetrahydrodipicolinate. Catalysis depends on lysine 160, which acts as the Proton donor. 166–167 (GT) lines the (S)-2,3,4,5-tetrahydrodipicolinate pocket.

Belongs to the DapB family.

The protein localises to the cytoplasm. It carries out the reaction (S)-2,3,4,5-tetrahydrodipicolinate + NAD(+) + H2O = (2S,4S)-4-hydroxy-2,3,4,5-tetrahydrodipicolinate + NADH + H(+). It catalyses the reaction (S)-2,3,4,5-tetrahydrodipicolinate + NADP(+) + H2O = (2S,4S)-4-hydroxy-2,3,4,5-tetrahydrodipicolinate + NADPH + H(+). The protein operates within amino-acid biosynthesis; L-lysine biosynthesis via DAP pathway; (S)-tetrahydrodipicolinate from L-aspartate: step 4/4. In terms of biological role, catalyzes the conversion of 4-hydroxy-tetrahydrodipicolinate (HTPA) to tetrahydrodipicolinate. This is 4-hydroxy-tetrahydrodipicolinate reductase from Bacillus subtilis (strain 168).